A 383-amino-acid polypeptide reads, in one-letter code: Protein COS7 (383 aa).

At 1-42 (MKENEVKDEKSVDVLSFKQLESQKIVLPQDLFRSSFTWFCYE) the chain is on the cytoplasmic side. The chain crosses the membrane as a helical span at residues 43-63 (IYKSLAFRIWMLLWLPLSVWW). The Extracellular portion of the chain corresponds to 64 to 72 (KLSNNCIYP). A helical membrane pass occupies residues 73 to 93 (LIVSLLVLFLGPIFVLVICGL). The Cytoplasmic portion of the chain corresponds to 94–232 (SRKRSLSKQL…RSKLTWFLKR (139 aa)). Residues 233–253 (IFTIYSLPLWLAFLNCICVSQ) traverse the membrane as a helical segment. Position 254 (histidine 254) is a topological domain, extracellular. Residues 255–275 (FCLAFRILCPGLFFLMMVWLF) form a helical membrane-spanning segment. The Cytoplasmic portion of the chain corresponds to 276–383 (QNMRTTALLV…SRNEESLMKK (108 aa)).

The protein belongs to the DUP/COS family.

The protein localises to the membrane. The polypeptide is Protein COS7 (COS7) (Saccharomyces cerevisiae (strain ATCC 204508 / S288c) (Baker's yeast)).